We begin with the raw amino-acid sequence, 580 residues long: Multidrug resistance-like ATP-binding protein MdlB (580 aa).

Positions 25–310 constitute an ABC transmembrane type-1 domain; it reads IILAFFLLLS…ITIQQSILQQ (286 aa). 5 helical membrane-spanning segments follow: residues 26–46, 61–81, 142–162, 165–185, and 258–278; these read ILAF…PILI, FQLI…AVFF, VGPT…AMFT, WHMA…MSIY, and LLSA…SIGV. An ABC transporter domain is found at 341–575; it reads INIKNLSFKY…KGFYWKMYNF (235 aa). Position 375 to 382 (375 to 382) interacts with ATP; the sequence is GQTGSGKS.

This sequence belongs to the ABC transporter superfamily. Drug exporter-2 (TC 3.A.1.117) family.

The protein resides in the cell membrane. It carries out the reaction ATP + H2O + xenobioticSide 1 = ADP + phosphate + xenobioticSide 2.. This is Multidrug resistance-like ATP-binding protein MdlB (mdlB) from Buchnera aphidicola subsp. Schizaphis graminum (strain Sg).